Reading from the N-terminus, the 470-residue chain is Chitin deacetylase 1 (470 aa).

The first 19 residues, M1 to A19, serve as a signal peptide directing secretion. N101 and N121 each carry an N-linked (GlcNAc...) asparagine glycan. C155 and C363 are joined by a disulfide. The region spanning N159 to K358 is the NodB homology domain. D166 serves as the catalytic Proton acceptor. D166 serves as a coordination point for acetate. Residues D167, H216, and H220 each coordinate Co(2+). Y257 serves as a coordination point for acetate. H331 serves as the catalytic Proton donor. N352, N378, and N440 each carry an N-linked (GlcNAc...) asparagine glycan. The tract at residues E406–G447 is disordered. Residues S408–G447 show a composition bias toward low complexity. S444 carries GPI-anchor amidated serine lipidation. Positions G445–A470 are cleaved as a propeptide — removed in mature form.

The protein belongs to the polysaccharide deacetylase family. Co(2+) is required as a cofactor.

It localises to the secreted. The protein localises to the cell wall. The protein resides in the cell membrane. It catalyses the reaction [(1-&gt;4)-N-acetyl-beta-D-glucosaminyl](n) + n H2O = chitosan + n acetate. Its function is as follows. Hydrolyzes the N-acetamido groups of N-acetyl-D-glucosamine residues in chitin to form chitosan and acetate. Chitosan is required to anchor melanin to the cell wall, for maintenance of cell wall integrity, and for proper cytokinesis. Plays a major role in synthesizing cell wall chitosan during host infection; chitosan offers an advantage during infection as it is less readily detected than chitin by host immunosurveillance mechanisms. This Cryptococcus neoformans var. grubii serotype A (strain H99 / ATCC 208821 / CBS 10515 / FGSC 9487) (Filobasidiella neoformans var. grubii) protein is Chitin deacetylase 1.